Here is a 208-residue protein sequence, read N- to C-terminus: Protein-L-isoaspartate O-methyltransferase (208 aa).

The active site involves serine 59.

This sequence belongs to the methyltransferase superfamily. L-isoaspartyl/D-aspartyl protein methyltransferase family.

The protein resides in the cytoplasm. The enzyme catalyses [protein]-L-isoaspartate + S-adenosyl-L-methionine = [protein]-L-isoaspartate alpha-methyl ester + S-adenosyl-L-homocysteine. In terms of biological role, catalyzes the methyl esterification of L-isoaspartyl residues in peptides and proteins that result from spontaneous decomposition of normal L-aspartyl and L-asparaginyl residues. It plays a role in the repair and/or degradation of damaged proteins. In Proteus mirabilis (strain HI4320), this protein is Protein-L-isoaspartate O-methyltransferase.